Consider the following 357-residue polypeptide: Ion-translocating oxidoreductase complex subunit D (357 aa).

3 helical membrane passes run 35 to 55 (VWLY…TVLV), 88 to 108 (LPPW…VVLG), and 119 to 139 (LFNP…VEMT). An FMN phosphoryl threonine modification is found at Thr176. 5 helical membrane-spanning segments follow: residues 209-229 (APGS…VYLI), 233-253 (VIAW…ATVF), 261-281 (YADA…FFIA), 295-315 (AVFA…GGYP), and 316-336 (EATA…DHWI).

The protein belongs to the NqrB/RnfD family. As to quaternary structure, the complex is composed of six subunits: RnfA, RnfB, RnfC, RnfD, RnfE and RnfG. It depends on FMN as a cofactor.

It localises to the cell inner membrane. Part of a membrane-bound complex that couples electron transfer with translocation of ions across the membrane. This chain is Ion-translocating oxidoreductase complex subunit D, found in Halorhodospira halophila (strain DSM 244 / SL1) (Ectothiorhodospira halophila (strain DSM 244 / SL1)).